We begin with the raw amino-acid sequence, 950 residues long: Protocadherin alpha-6 (950 aa).

Positions 1-29 are cleaved as a signal peptide; it reads MVFTPEDRLGKQCLLLPLLLLAAWKVGSG. Residues 30–697 lie on the Extracellular side of the membrane; the sequence is QLHYSVPEEA…GPEAALVDVN (668 aa). 6 Cadherin domains span residues 34 to 133, 157 to 242, 243 to 350, 351 to 455, 456 to 565, and 581 to 678; these read SVPE…PPLF, ASDA…APNF, EQSE…VPEI, ALTS…APAF, AQPE…APAL, and VPRS…APKA. Residues asparagine 257, asparagine 265, asparagine 386, and asparagine 548 are each glycosylated (N-linked (GlcNAc...) asparagine). The helical transmembrane segment at 698 to 718 threads the bilayer; the sequence is VYLIIAICAVSSLLVLTLLLY. At 719 to 950 the chain is on the cytoplasmic side; the sequence is TALRCSAPST…GNSTTDNSDQ (232 aa). PXXP repeat units lie at residues 799–802, 832–835, 873–876, and 891–894; these read PRQP, PGGP, PGNP, and PGSP. Positions 799–894 are 4 X 4 AA repeats of P-X-X-P; that stretch reads PRQPNPDWRY…PDKFIIPGSP (96 aa). Residues 830–889 are disordered; sequence AGPGGPDQQWPTVSSATPEPEAGEVSPPVGAGVNSNSWTFKYGPGNPKQSGPGELPDKFI. The tract at residues 901 to 950 is disordered; it reads QEPANSQIDKSDFITFGKKEETKKKKKKKKGNKTQEKKEKGNSTTDNSDQ. Over residues 909-923 the composition is skewed to basic and acidic residues; that stretch reads DKSDFITFGKKEETK.

It localises to the cell membrane. Potential calcium-dependent cell-adhesion protein. May be involved in the establishment and maintenance of specific neuronal connections in the brain. The polypeptide is Protocadherin alpha-6 (PCDHA6) (Pan troglodytes (Chimpanzee)).